The primary structure comprises 498 residues: WD repeat-containing protein 55 homolog (498 aa).

Positions 1–131 (MHTHNNFKTP…ATFDLDEDDE (131 aa)) are disordered. Composition is skewed to acidic residues over residues 12–23 (DEDELDDLDEDM) and 31–48 (IEQE…EYDL). WD repeat units follow at residues 154-193 (KLED…NKLL), 198-237 (VHSK…LKKL), 241-279 (AHDD…AIFE), 282-321 (ELED…MYVQ), 324-363 (PYEE…YHCD), and 408-447 (QHNM…DFGE).

It belongs to the WD repeat WDR55 family.

The protein is WD repeat-containing protein 55 homolog of Drosophila simulans (Fruit fly).